Consider the following 309-residue polypeptide: Isethionate sulfite-lyase activating enzyme (309 aa).

The 288-residue stretch at 22-309 folds into the Radical SAM core domain; that stretch reads HDGPGIRTVV…VVAAEHATDG (288 aa). Cys-36, Cys-40, Cys-43, Cys-62, Cys-68, Cys-71, Cys-75, Cys-95, Cys-98, Cys-102, and Cys-106 together coordinate [4Fe-4S] cluster. 42 to 44 serves as a coordination point for S-adenosyl-L-methionine; the sequence is WCS. 4Fe-4S ferredoxin-type domains lie at 53–85 and 86–117; these read IELA…RADD and DTIS…YGTT. S-adenosyl-L-methionine contacts are provided by residues Gly-146, 195-197, and His-268; that span reads DIK.

The protein belongs to the organic radical-activating enzymes family. In terms of assembly, monomer. [4Fe-4S] cluster is required as a cofactor.

It carries out the reaction glycyl-[protein] + reduced [flavodoxin] + S-adenosyl-L-methionine = glycin-2-yl radical-[protein] + semiquinone [flavodoxin] + 5'-deoxyadenosine + L-methionine + H(+). It participates in organosulfur degradation; alkanesulfonate degradation. Involved in an anaerobic respiration pathway that converts the sulfonate isethionate (2-hydroxyethanesulfonate) to ammonia, acetate and sulfide. Catalyzes activation of the isethionate sulfite-lyase IslA under anaerobic conditions by generation of an organic free radical on a glycine residue, via a homolytic cleavage of S-adenosyl-L-methionine (SAM). This Oleidesulfovibrio alaskensis (strain ATCC BAA-1058 / DSM 17464 / G20) (Desulfovibrio alaskensis) protein is Isethionate sulfite-lyase activating enzyme.